Here is a 184-residue protein sequence, read N- to C-terminus: ATP synthase subunit delta (184 aa).

Belongs to the ATPase delta chain family. In terms of assembly, F-type ATPases have 2 components, F(1) - the catalytic core - and F(0) - the membrane proton channel. F(1) has five subunits: alpha(3), beta(3), gamma(1), delta(1), epsilon(1). F(0) has three main subunits: a(1), b(2) and c(10-14). The alpha and beta chains form an alternating ring which encloses part of the gamma chain. F(1) is attached to F(0) by a central stalk formed by the gamma and epsilon chains, while a peripheral stalk is formed by the delta and b chains.

The protein resides in the cell membrane. F(1)F(0) ATP synthase produces ATP from ADP in the presence of a proton or sodium gradient. F-type ATPases consist of two structural domains, F(1) containing the extramembraneous catalytic core and F(0) containing the membrane proton channel, linked together by a central stalk and a peripheral stalk. During catalysis, ATP synthesis in the catalytic domain of F(1) is coupled via a rotary mechanism of the central stalk subunits to proton translocation. In terms of biological role, this protein is part of the stalk that links CF(0) to CF(1). It either transmits conformational changes from CF(0) to CF(1) or is implicated in proton conduction. In Amoebophilus asiaticus (strain 5a2), this protein is ATP synthase subunit delta.